The chain runs to 199 residues: GTP-binding protein Di-Ras2 (199 aa).

GTP contacts are provided by residues 14 to 21, 33 to 39, 61 to 65, and 121 to 124; these read GAGGVGKS, RESYIPT, DTTGS, and NKCD. Serine 35 is modified (phosphoserine). Residues 36–44 carry the Effector region motif; sequence YIPTVEDTY. Residue serine 126 is modified to Phosphoserine. 152–153 is a GTP binding site; sequence AK. Cysteine methyl ester is present on cysteine 196. Cysteine 196 carries the S-geranylgeranyl cysteine lipid modification. A propeptide spans 197–199 (removed in mature form); the sequence is VVM.

Belongs to the small GTPase superfamily. Di-Ras family. Ubiquitinated by the ECS(ASB11) complex via 'Lys-11'-linked ubiquitin chains, leading to its degradation by the proteasome.

It is found in the cell membrane. It catalyses the reaction GTP + H2O = GDP + phosphate + H(+). Functionally, displays low GTPase activity and exists predominantly in the GTP-bound form. In Mus musculus (Mouse), this protein is GTP-binding protein Di-Ras2 (Diras2).